The sequence spans 302 residues: tRNA pseudouridine synthase B (302 aa).

Asp-43 (nucleophile) is an active-site residue.

Belongs to the pseudouridine synthase TruB family. Type 1 subfamily.

The enzyme catalyses uridine(55) in tRNA = pseudouridine(55) in tRNA. Functionally, responsible for synthesis of pseudouridine from uracil-55 in the psi GC loop of transfer RNAs. The chain is tRNA pseudouridine synthase B from Burkholderia pseudomallei (strain 668).